Reading from the N-terminus, the 433-residue chain is Histidine--tRNA ligase (433 aa).

Belongs to the class-II aminoacyl-tRNA synthetase family. Homodimer.

Its subcellular location is the cytoplasm. The catalysed reaction is tRNA(His) + L-histidine + ATP = L-histidyl-tRNA(His) + AMP + diphosphate + H(+). The chain is Histidine--tRNA ligase from Blochmanniella floridana.